The chain runs to 189 residues: Putative manganese efflux pump MntP (189 aa).

A run of 6 helical transmembrane segments spans residues 6 to 26 (IFGI…AAGV), 39 to 59 (LAWH…YAGL), 71 to 91 (WIAF…SFDA), 106 to 126 (LVLL…SLSV), 131 to 151 (VWMP…GGLM), and 169 to 189 (VGAG…GVFY).

Belongs to the MntP (TC 9.B.29) family.

It localises to the cell inner membrane. Its function is as follows. Probably functions as a manganese efflux pump. The protein is Putative manganese efflux pump MntP of Desulfosudis oleivorans (strain DSM 6200 / JCM 39069 / Hxd3) (Desulfococcus oleovorans).